A 141-amino-acid chain; its full sequence is Nucleoside diphosphate kinase (141 aa).

The ATP site is built by Lys11, Phe59, Arg87, Thr93, Arg104, and Asn114. His117 serves as the catalytic Pros-phosphohistidine intermediate.

Belongs to the NDK family. In terms of assembly, homotetramer. The cofactor is Mg(2+).

The protein resides in the cytoplasm. It carries out the reaction a 2'-deoxyribonucleoside 5'-diphosphate + ATP = a 2'-deoxyribonucleoside 5'-triphosphate + ADP. The catalysed reaction is a ribonucleoside 5'-diphosphate + ATP = a ribonucleoside 5'-triphosphate + ADP. Functionally, major role in the synthesis of nucleoside triphosphates other than ATP. The ATP gamma phosphate is transferred to the NDP beta phosphate via a ping-pong mechanism, using a phosphorylated active-site intermediate. This chain is Nucleoside diphosphate kinase, found in Variovorax paradoxus (strain S110).